Here is a 382-residue protein sequence, read N- to C-terminus: Alkanesulfonate monooxygenase (382 aa).

This sequence belongs to the SsuD family.

The catalysed reaction is an alkanesulfonate + FMNH2 + O2 = an aldehyde + FMN + sulfite + H2O + 2 H(+). Catalyzes the desulfonation of aliphatic sulfonates. This Pseudomonas putida (strain GB-1) protein is Alkanesulfonate monooxygenase.